A 482-amino-acid chain; its full sequence is ATP synthase subunit beta (482 aa).

161 to 168 (GGAGVGKT) provides a ligand contact to ATP.

This sequence belongs to the ATPase alpha/beta chains family. In terms of assembly, F-type ATPases have 2 components, CF(1) - the catalytic core - and CF(0) - the membrane proton channel. CF(1) has five subunits: alpha(3), beta(3), gamma(1), delta(1), epsilon(1). CF(0) has three main subunits: a(1), b(2) and c(9-12). The alpha and beta chains form an alternating ring which encloses part of the gamma chain. CF(1) is attached to CF(0) by a central stalk formed by the gamma and epsilon chains, while a peripheral stalk is formed by the delta and b chains.

Its subcellular location is the cell inner membrane. It carries out the reaction ATP + H2O + 4 H(+)(in) = ADP + phosphate + 5 H(+)(out). Functionally, produces ATP from ADP in the presence of a proton gradient across the membrane. The catalytic sites are hosted primarily by the beta subunits. The chain is ATP synthase subunit beta from Solibacter usitatus (strain Ellin6076).